Consider the following 201-residue polypeptide: Protein LIGHT-DEPENDENT SHORT HYPOCOTYLS 2 (201 aa).

A compositionally biased stretch (polar residues) spans 1 to 14; that stretch reads MDLISQNHNNRNPN. Disordered regions lie at residues 1–37 and 151–201; these read MDLI…YENQ and SRGV…GATQ. Residues 15–32 show a composition bias toward low complexity; that stretch reads TSLSTQTPSSFSSPPSSS. The ALOG domain maps to 33–160; the sequence is RYENQKRRDW…SRGVSYEKKR (128 aa). A Nuclear localization signal motif is present at residues 158 to 162; it reads KKRKR.

Belongs to the plant homeotic and developmental regulators ALOG protein family.

It is found in the nucleus. Functionally, probable transcription regulator that acts as a developmental regulator by promoting cell growth in response to light. The protein is Protein LIGHT-DEPENDENT SHORT HYPOCOTYLS 2 (LSH2) of Arabidopsis thaliana (Mouse-ear cress).